The primary structure comprises 204 residues: FMN-dependent NADH:quinone oxidoreductase 1 (204 aa).

FMN contacts are provided by residues Ser-10 and 15–17; that span reads SLS.

It belongs to the azoreductase type 1 family. In terms of assembly, homodimer. The cofactor is FMN.

It carries out the reaction 2 a quinone + NADH + H(+) = 2 a 1,4-benzosemiquinone + NAD(+). The enzyme catalyses N,N-dimethyl-1,4-phenylenediamine + anthranilate + 2 NAD(+) = 2-(4-dimethylaminophenyl)diazenylbenzoate + 2 NADH + 2 H(+). Functionally, quinone reductase that provides resistance to thiol-specific stress caused by electrophilic quinones. Its function is as follows. Also exhibits azoreductase activity. Catalyzes the reductive cleavage of the azo bond in aromatic azo compounds to the corresponding amines. This Rhizobium etli (strain ATCC 51251 / DSM 11541 / JCM 21823 / NBRC 15573 / CFN 42) protein is FMN-dependent NADH:quinone oxidoreductase 1.